We begin with the raw amino-acid sequence, 233 residues long: Large ribosomal subunit protein uL1 (233 aa).

The protein belongs to the universal ribosomal protein uL1 family. As to quaternary structure, part of the 50S ribosomal subunit.

Binds directly to 23S rRNA. The L1 stalk is quite mobile in the ribosome, and is involved in E site tRNA release. Its function is as follows. Protein L1 is also a translational repressor protein, it controls the translation of the L11 operon by binding to its mRNA. In Shewanella loihica (strain ATCC BAA-1088 / PV-4), this protein is Large ribosomal subunit protein uL1.